A 368-amino-acid chain; its full sequence is MQTYGKTDVTYAWYAGNSGVTNRSGRFIASHIGHTGLICFGAGANTLFELARYDSALPIGDQGFVVLPHLAGLGIGGIENGVITDSYGMLVVAVFHLIFSAVYAGGAMLHSFRYKEDLGEYPQGSRPNKFDFKWDDPDRLTFILGHHLLFLGLGCVQFVEWAKYHGIYDPAMGVVRKVEYNLDLSMVWNHQIDFLTINSLEDVMGGHAFLAFFLSAGAIWHIFSKPFGEYTEFKGKGLLSAEFVLSTSLAGAAFIAFVAAFWASMNTTIYPTDLYGGPLNIELNFAPYFSDTDPLFGGDLHSARSWLSNFHFYLGFFYLQGHFWHGLRAMGFDFKRVEKLFDQLESNEISLNPAKSTTVPSTSTDSAT.

The next 6 membrane-spanning stretches (helical) occupy residues 27 to 47, 63 to 83, 89 to 109, 203 to 223, 243 to 263, and 307 to 327; these read FIAS…ANTL, GFVV…NGVI, MLVV…GAML, VMGG…WHIF, FVLS…AFWA, and LSNF…WHGL.

Belongs to the PsbB/PsbC family. IsiA/Pcb subfamily. As to quaternary structure, the antenna complex consists of divinyl chlorophylls (a and b) and divinyl chlorophyll a/b binding proteins. Forms complexes with PSII, consisting of a PSII dimer and 4 or 8 PcbA subunits. These complexes are also found under conditions of iron-starvation. Requires divinyl chlorophyll a as cofactor. Divinyl chlorophyll b serves as cofactor.

The protein resides in the cellular thylakoid membrane. Functionally, the antenna complex functions as a light receptor, it captures and delivers excitation energy to photosystems II. The Prochlorales pcb genes are not related to higher plant LHCs. The chain is Divinyl chlorophyll a/b light-harvesting protein PcbA (pcbA) from Prochlorococcus marinus (strain MIT 9313).